The following is a 383-amino-acid chain: MKNKLPPFIEIYRALIATPSISATEEALDQSNADLITLLADWFKDLGFNVEVQPVPGTRNKFNMLASCGQGAGGLLLAGHTDTVPFDDGRWTRDPFTLTEHDGKLYGLGTADMKGFFAFILDALRDVDVTKLKKPLYILATADEETSMAGARYFAETTALRPDCAIIGEPTSLQPVRAHKGHISNAIRIQGQSGHSSDPARGVNAIELMHDAIGHILQLRDNLKERYHYEAFTVPYPTLNLGHIHGGDASNRICACCELHMDIRPLPGMTLNELNGLLNDALAPVNERWPGRLTVDELHPPIPGYECPPNHQLVEVVEKLLGAKTEVVNYCTEAPFIQTLCPTLVLGPGSINQAHQPDEYLETRFIKPTRELITQVIHHFCWH.

His-80 is a binding site for Zn(2+). Residue Asp-82 is part of the active site. A Zn(2+)-binding site is contributed by Asp-112. The active site involves Glu-144. Residues Glu-145, Glu-169, and His-355 each coordinate Zn(2+).

It belongs to the peptidase M20A family. ArgE subfamily. As to quaternary structure, homodimer. It depends on Zn(2+) as a cofactor. Requires Co(2+) as cofactor. Glutathione is required as a cofactor.

It is found in the cytoplasm. It carries out the reaction N(2)-acetyl-L-ornithine + H2O = L-ornithine + acetate. Its pathway is amino-acid biosynthesis; L-arginine biosynthesis; L-ornithine from N(2)-acetyl-L-ornithine (linear): step 1/1. Its function is as follows. Catalyzes the hydrolysis of the amide bond of N(2)-acetylated L-amino acids. Cleaves the acetyl group from N-acetyl-L-ornithine to form L-ornithine, an intermediate in L-arginine biosynthesis pathway, and a branchpoint in the synthesis of polyamines. The protein is Acetylornithine deacetylase of Escherichia coli O139:H28 (strain E24377A / ETEC).